We begin with the raw amino-acid sequence, 940 residues long: Coatomer subunit beta (940 aa).

HEAT repeat units lie at residues 11–48 (FLEA…NGDS), 90–125 (QEMI…KEPE), 126–162 (LLDP…VSNH), and 310–347 (SILE…SRNV).

In terms of assembly, oligomeric complex that consists of at least the alpha, beta, beta', gamma, delta, epsilon and zeta subunits.

It localises to the cytoplasm. It is found in the golgi apparatus membrane. Its subcellular location is the cytoplasmic vesicle. The protein resides in the COPI-coated vesicle membrane. In terms of biological role, the coatomer is a cytosolic protein complex that binds to dilysine motifs and reversibly associates with Golgi non-clathrin-coated vesicles, which further mediate biosynthetic protein transport from the ER, via the Golgi up to the trans Golgi network. Coatomer complex is required for budding from Golgi membranes, and is essential for the retrograde Golgi-to-ER transport of dilysine-tagged proteins. In Schizosaccharomyces pombe (strain 972 / ATCC 24843) (Fission yeast), this protein is Coatomer subunit beta (sec26).